Reading from the N-terminus, the 175-residue chain is MRAYWFDNLEGDQRQPHDSGRAVDPAYLSKLGVLYHHISSQSEVDELAKARDYKNRDEITVSPEKMGDIYEEKVKSFFHEHLHEDEEIRYILDGAGYFDVRSEGDDWVRIWLEKGDLIILPSGIYHRFTTDEQNYTKAMRLFKDEPKWTPLNRGEETDENQFRQEYLKLRQGLAA.

Fe(2+) is bound by residues His81, His83, Glu87, and His126. The Ni(2+) site is built by His81, His83, Glu87, and His126.

It belongs to the acireductone dioxygenase (ARD) family. The cofactor is Fe(2+). Requires Ni(2+) as cofactor.

It localises to the cytoplasm. The protein resides in the nucleus. The enzyme catalyses 1,2-dihydroxy-5-(methylsulfanyl)pent-1-en-3-one + O2 = 4-methylsulfanyl-2-oxobutanoate + formate + 2 H(+). It catalyses the reaction 1,2-dihydroxy-5-(methylsulfanyl)pent-1-en-3-one + O2 = 3-(methylsulfanyl)propanoate + CO + formate + 2 H(+). The protein operates within amino-acid biosynthesis; L-methionine biosynthesis via salvage pathway; L-methionine from S-methyl-5-thio-alpha-D-ribose 1-phosphate: step 5/6. In terms of biological role, catalyzes 2 different reactions between oxygen and the acireductone 1,2-dihydroxy-3-keto-5-methylthiopentene (DHK-MTPene) depending upon the metal bound in the active site. Fe-containing acireductone dioxygenase (Fe-ARD) produces formate and 2-keto-4-methylthiobutyrate (KMTB), the alpha-ketoacid precursor of methionine in the methionine recycle pathway. Ni-containing acireductone dioxygenase (Ni-ARD) produces methylthiopropionate, carbon monoxide and formate, and does not lie on the methionine recycle pathway. This chain is Acireductone dioxygenase, found in Phaeosphaeria nodorum (strain SN15 / ATCC MYA-4574 / FGSC 10173) (Glume blotch fungus).